A 316-amino-acid chain; its full sequence is Large ribosomal subunit protein uL10 (316 aa).

Residues 289–316 are disordered; sequence AAAAAPAKEAPKEESEESDEDMGFGLFD.

The protein belongs to the universal ribosomal protein uL10 family. As to quaternary structure, P0 forms a pentameric complex by interaction with dimers of P1 and P2. Post-translationally, phosphorylated.

It localises to the nucleus. Its subcellular location is the cytoplasm. Functionally, ribosomal protein P0 is the functional equivalent of E.coli protein L10. This is Large ribosomal subunit protein uL10 (RPLP0) from Gallus gallus (Chicken).